A 123-amino-acid polypeptide reads, in one-letter code: Transmembrane protein 80 (123 aa).

The next 4 helical transmembrane spans lie at 2-22, 35-55, 68-88, and 102-122; these read LFHLSGLYSALYFLATLLMIV, LALDLVLLLLMGILKVAQLYL, LAASLAFTAVGGLLSVHFLLW, and VLLVLHGLEAGLQVVVIADFI.

Its subcellular location is the membrane. It is found in the cell projection. It localises to the cilium. This Mus musculus (Mouse) protein is Transmembrane protein 80 (Tmem80).